A 141-amino-acid chain; its full sequence is Oleosin 14.9 kDa (141 aa).

A compositionally biased stretch (basic and acidic residues) spans 1-22 (MADQTRTHHEMISRDSTQEAHP). A disordered region spans residues 1–24 (MADQTRTHHEMISRDSTQEAHPKA). Residues 1-29 (MADQTRTHHEMISRDSTQEAHPKARQMVK) are polar. A hydrophobic region spans residues 30 to 141 (AATAVTAGGS…NIGVQHQQVS (112 aa)). 3 helical membrane-spanning segments follow: residues 38–58 (GSLL…LTVA), 60–80 (PLLV…ALII), and 81–101 (TGFL…SWLY).

The protein belongs to the oleosin family.

The protein localises to the lipid droplet. It localises to the membrane. Its function is as follows. May have a structural role to stabilize the lipid body during desiccation of the seed by preventing coalescence of the oil. Probably interacts with both lipid and phospholipid moieties of lipid bodies. May also provide recognition signals for specific lipase anchorage in lipolysis during seedling growth. This chain is Oleosin 14.9 kDa (OL3), found in Arabidopsis thaliana (Mouse-ear cress).